A 111-amino-acid polypeptide reads, in one-letter code: Prothymosin alpha (111 aa).

Methionine 1 bears the N-acetylmethionine mark. The tract at residues 1–111 is disordered; sequence MSDAAVDTSS…TKKQKTDEDD (111 aa). Serine 2 carries the N-acetylserine; in Prothymosin alpha, N-terminally processed modification. The residue at position 2 (serine 2) is a Phosphoserine. Threonine 8 is modified (phosphothreonine). Serine 9 and serine 10 each carry phosphoserine. A phosphothreonine mark is found at threonine 13 and threonine 14. Positions 13–31 are enriched in basic and acidic residues; it reads TTKDLKEKKEVVEEAENGR. Lysine 15 carries the N6-acetyllysine; alternate modification. Lysine 15 carries the N6-succinyllysine; alternate modification. A compositionally biased stretch (acidic residues) spans 40 to 84; that stretch reads ENEENGEQEADNEVDEEEEEGGEEEEEEEEGDGEEEDGDEDEEAE. The segment covering 101–111 has biased composition (basic and acidic residues); the sequence is DTKKQKTDEDD. At threonine 102 the chain carries Phosphothreonine. Lysine 103 bears the N6-acetyllysine; alternate mark. Lysine 103 is covalently cross-linked (Glycyl lysine isopeptide (Lys-Gly) (interchain with G-Cter in SUMO2); alternate). Threonine 107 is modified (phosphothreonine).

Belongs to the pro/parathymosin family. In terms of assembly, interacts with NUPR1; regulates apoptotic process. Post-translationally, covalently linked to a small RNA of about 20 nucleotides.

It is found in the nucleus. In terms of biological role, prothymosin alpha may mediate immune function by conferring resistance to certain opportunistic infections. The polypeptide is Prothymosin alpha (PTMA) (Homo sapiens (Human)).